The sequence spans 293 residues: Ribosomal protein L11 methyltransferase (293 aa).

Residues Thr145, Gly166, Asp188, and Asn230 each contribute to the S-adenosyl-L-methionine site.

It belongs to the methyltransferase superfamily. PrmA family.

The protein localises to the cytoplasm. The enzyme catalyses L-lysyl-[protein] + 3 S-adenosyl-L-methionine = N(6),N(6),N(6)-trimethyl-L-lysyl-[protein] + 3 S-adenosyl-L-homocysteine + 3 H(+). In terms of biological role, methylates ribosomal protein L11. The chain is Ribosomal protein L11 methyltransferase from Serratia proteamaculans (strain 568).